Reading from the N-terminus, the 236-residue chain is 2-C-methyl-D-erythritol 4-phosphate cytidylyltransferase (236 aa).

It belongs to the IspD/TarI cytidylyltransferase family. IspD subfamily.

The enzyme catalyses 2-C-methyl-D-erythritol 4-phosphate + CTP + H(+) = 4-CDP-2-C-methyl-D-erythritol + diphosphate. It functions in the pathway isoprenoid biosynthesis; isopentenyl diphosphate biosynthesis via DXP pathway; isopentenyl diphosphate from 1-deoxy-D-xylulose 5-phosphate: step 2/6. Catalyzes the formation of 4-diphosphocytidyl-2-C-methyl-D-erythritol from CTP and 2-C-methyl-D-erythritol 4-phosphate (MEP). The protein is 2-C-methyl-D-erythritol 4-phosphate cytidylyltransferase of Pseudomonas syringae pv. syringae (strain B728a).